A 383-amino-acid chain; its full sequence is Trichodiene synthase (383 aa).

It belongs to the trichodiene synthase family.

It catalyses the reaction (2E,6E)-farnesyl diphosphate = trichodiene + diphosphate. It functions in the pathway sesquiterpene biosynthesis; trichothecene biosynthesis. Functionally, TS is a member of the terpene cyclase group of enzymes. It catalyzes the isomerization and cyclization of farnesyl pyro-phosphate to form trichodiene, the first cyclic intermediate in the biosynthetic pathway for trichothecenes. It serves to branch trichothecene biosynthesis from the isoprenoid pathway. The protein is Trichodiene synthase (TRI5) of Stachybotrys chartarum (Toxic black mold).